Consider the following 930-residue polypeptide: Protein translocase subunit SecA (930 aa).

ATP contacts are provided by residues Gln87, 105–109 (GEGKT), and Asp515. Residues Cys914, Cys916, Cys925, and His926 each contribute to the Zn(2+) site.

The protein belongs to the SecA family. As to quaternary structure, monomer and homodimer. Part of the essential Sec protein translocation apparatus which comprises SecA, SecYEG and auxiliary proteins SecDF-YajC and YidC. The cofactor is Zn(2+).

The protein resides in the cell inner membrane. It is found in the cytoplasm. The catalysed reaction is ATP + H2O + cellular proteinSide 1 = ADP + phosphate + cellular proteinSide 2.. Its function is as follows. Part of the Sec protein translocase complex. Interacts with the SecYEG preprotein conducting channel. Has a central role in coupling the hydrolysis of ATP to the transfer of proteins into and across the cell membrane, serving both as a receptor for the preprotein-SecB complex and as an ATP-driven molecular motor driving the stepwise translocation of polypeptide chains across the membrane. This is Protein translocase subunit SecA from Burkholderia vietnamiensis (strain G4 / LMG 22486) (Burkholderia cepacia (strain R1808)).